A 104-amino-acid polypeptide reads, in one-letter code: MIMRPTPDMAMLLAAGLFALGLLGVLVRRNLLFMLMSIEIMLNAAALAFVAAGTRWHAAEGQVMFLMILSLAAAEAAIGLAILLRMHQAGRPTLDADTGNRLKG.

The next 3 helical transmembrane spans lie at 7 to 27, 31 to 51, and 63 to 83; these read PDMAMLLAAGLFALGLLGVLV, LLFMLMSIEIMLNAAALAFVA, and VMFLMILSLAAAEAAIGLAIL.

Belongs to the complex I subunit 4L family. NDH-1 is composed of 14 different subunits. Subunits NuoA, H, J, K, L, M, N constitute the membrane sector of the complex.

The protein localises to the cell inner membrane. The catalysed reaction is a quinone + NADH + 5 H(+)(in) = a quinol + NAD(+) + 4 H(+)(out). NDH-1 shuttles electrons from NADH, via FMN and iron-sulfur (Fe-S) centers, to quinones in the respiratory chain. The immediate electron acceptor for the enzyme in this species is believed to be ubiquinone. Couples the redox reaction to proton translocation (for every two electrons transferred, four hydrogen ions are translocated across the cytoplasmic membrane), and thus conserves the redox energy in a proton gradient. In Gluconacetobacter diazotrophicus (strain ATCC 49037 / DSM 5601 / CCUG 37298 / CIP 103539 / LMG 7603 / PAl5), this protein is NADH-quinone oxidoreductase subunit K.